A 461-amino-acid chain; its full sequence is MPMLKIYNSITRQKQEFKPINPGKIGMYVCGVTIYDLCHIGHGRTFVSFDMIVRYLRYVGYEVNFQRNITDVDDKIIKRANENNESCEALTERLIGEMHRDFDALNMLRPDFEPRATLHIAEIIDMVELLLARGHAYVASDGDVLFSVASYPDYGRLSGQNLDQLQAGARVEVDENKQNPMDFVLWKMSKPGEPTWESPWGPGRPGWHIECSAMNSKHLGLHFDIHGGGSDLQFPHHENEIAQSCCAHDTPYVNYWMHTGMVMVDREKMSKSLGNFFTIRDVLGHYDAETVRYFLLSGHYRSQLNYSEDNLKQARSALERLYTAIKDVDLTVAAAPAEEFIVKFKAAMDDDFNTPEAYSVLFDMVRDINRLKATDIAKASALAVAMKQLADVLGLLGQDPDAFFKGEGSDDEVAEIEALIVERNRARSEKDWPAADVARNRLNELGVVLEDGPSGTTWRKK.

Zn(2+) is bound at residue Cys30. Residues 32–42 (VTIYDLCHIGH) carry the 'HIGH' region motif. 3 residues coordinate Zn(2+): Cys211, His236, and Glu240. A 'KMSKS' region motif is present at residues 268–272 (KMSKS). An ATP-binding site is contributed by Lys271.

This sequence belongs to the class-I aminoacyl-tRNA synthetase family. Monomer. Zn(2+) serves as cofactor.

It localises to the cytoplasm. The catalysed reaction is tRNA(Cys) + L-cysteine + ATP = L-cysteinyl-tRNA(Cys) + AMP + diphosphate. This chain is Cysteine--tRNA ligase, found in Shewanella sp. (strain W3-18-1).